We begin with the raw amino-acid sequence, 93 residues long: Small ribosomal subunit protein bS20 (93 aa).

Over residues 1-11 (MPQHKSAEKRV) the composition is skewed to basic and acidic residues. Residues 1-23 (MPQHKSAEKRVRQSKRRNARNRV) form a disordered region. A compositionally biased stretch (basic residues) spans 12-23 (RQSKRRNARNRV).

This sequence belongs to the bacterial ribosomal protein bS20 family.

Binds directly to 16S ribosomal RNA. In Chloroherpeton thalassium (strain ATCC 35110 / GB-78), this protein is Small ribosomal subunit protein bS20.